The following is a 323-amino-acid chain: tRNA U34 carboxymethyltransferase (323 aa).

Carboxy-S-adenosyl-L-methionine contacts are provided by residues Lys-91, Trp-105, Lys-110, Gly-130, 181–182 (IE), Met-196, Tyr-200, and Arg-315.

Belongs to the class I-like SAM-binding methyltransferase superfamily. CmoB family. In terms of assembly, homotetramer.

The enzyme catalyses carboxy-S-adenosyl-L-methionine + 5-hydroxyuridine(34) in tRNA = 5-carboxymethoxyuridine(34) in tRNA + S-adenosyl-L-homocysteine + H(+). Functionally, catalyzes carboxymethyl transfer from carboxy-S-adenosyl-L-methionine (Cx-SAM) to 5-hydroxyuridine (ho5U) to form 5-carboxymethoxyuridine (cmo5U) at position 34 in tRNAs. The chain is tRNA U34 carboxymethyltransferase from Yersinia pestis bv. Antiqua (strain Antiqua).